The sequence spans 371 residues: Peptide chain release factor 2 (371 aa).

An N5-methylglutamine modification is found at glutamine 252.

This sequence belongs to the prokaryotic/mitochondrial release factor family. Methylated by PrmC. Methylation increases the termination efficiency of RF2.

It localises to the cytoplasm. Its function is as follows. Peptide chain release factor 2 directs the termination of translation in response to the peptide chain termination codons UGA and UAA. The protein is Peptide chain release factor 2 of Staphylococcus epidermidis (strain ATCC 35984 / DSM 28319 / BCRC 17069 / CCUG 31568 / BM 3577 / RP62A).